A 213-amino-acid polypeptide reads, in one-letter code: 5-oxoprolinase subunit B (213 aa).

The protein belongs to the PxpB family. As to quaternary structure, forms a complex composed of PxpA, PxpB and PxpC.

It carries out the reaction 5-oxo-L-proline + ATP + 2 H2O = L-glutamate + ADP + phosphate + H(+). Functionally, catalyzes the cleavage of 5-oxoproline to form L-glutamate coupled to the hydrolysis of ATP to ADP and inorganic phosphate. The polypeptide is 5-oxoprolinase subunit B (Haemophilus influenzae (strain ATCC 51907 / DSM 11121 / KW20 / Rd)).